Here is a 383-residue protein sequence, read N- to C-terminus: Protein salvador homolog 1 (383 aa).

Phosphoserine occurs at positions 94 and 136. WW domains are found at residues 199 to 232 (LPLP…HPLE) and 234 to 267 (EGLP…HPCA). The residue at position 210 (T210) is a Phosphothreonine. The SARAH domain occupies 321 to 368 (ILKWELFQLADLDTYQGMLKLLFMKELEQIVKMYEAYRQALLTELENR). Positions 344-373 (MKELEQIVKMYEAYRQALLTELENRKQRQQ) form a coiled coil.

As to quaternary structure, homodimer. Stabilized through interaction with STK3/MST2 or STK4/MST1. Interacts (via SARAH domain) with isoform 1 of NEK2. Interacts with ESR1 only in the presence of STK3/MST2. Interacts with WTIP and AJUBA. Phosphorylated by STK3/MST2 and STK4/MST1. Phosphorylation is not required for SAV1 stability and may increase the number of protein binding sites on the scaffold molecule. As to expression, ubiquitously expressed in adult tissues with highest expression in the pancreas, aorta and interventricular septum and lowest expression in skeletal muscle. Expression was higher in fetal than in the adult heart. Expressed in various cell lines.

The protein resides in the nucleus. The protein localises to the cytoplasm. Functionally, regulator of STK3/MST2 and STK4/MST1 in the Hippo signaling pathway which plays a pivotal role in organ size control and tumor suppression by restricting proliferation and promoting apoptosis. The core of this pathway is composed of a kinase cascade wherein STK3/MST2 and STK4/MST1, in complex with its regulatory protein SAV1, phosphorylates and activates LATS1/2 in complex with its regulatory protein MOB1, which in turn phosphorylates and inactivates YAP1 oncoprotein and WWTR1/TAZ. Phosphorylation of YAP1 by LATS1/2 inhibits its translocation into the nucleus to regulate cellular genes important for cell proliferation, cell death, and cell migration. SAV1 is required for STK3/MST2 and STK4/MST1 activation and promotes cell-cycle exit and terminal differentiation in developing epithelial tissues. Plays a role in centrosome disjunction by regulating the localization of NEK2 to centrosomes, and its ability to phosphorylate CROCC and CEP250. In conjunction with STK3/MST2, activates the transcriptional activity of ESR1 through the modulation of its phosphorylation. The polypeptide is Protein salvador homolog 1 (Homo sapiens (Human)).